Here is a 297-residue protein sequence, read N- to C-terminus: Esterase LipU (297 aa).

Catalysis depends on residues Ser140, Glu239, and His269.

The protein belongs to the 'GDXG' lipolytic enzyme family.

The protein localises to the secreted. The enzyme catalyses a fatty acid ester + H2O = an aliphatic alcohol + a fatty acid + H(+). It carries out the reaction a butanoate ester + H2O = an aliphatic alcohol + butanoate + H(+). It catalyses the reaction an acetyl ester + H2O = an aliphatic alcohol + acetate + H(+). The catalysed reaction is decanoate ester + H2O = decanoate + an aliphatic alcohol + H(+). The enzyme catalyses an octanoate ester + H2O = an aliphatic alcohol + octanoate + H(+). It carries out the reaction a dodecanoate ester + H2O = an aliphatic alcohol + dodecanoate + H(+). It catalyses the reaction hexadecanoate ester + H2O = an aliphatic alcohol + hexadecanoate + H(+). With respect to regulation, inhibited by the ionic detergent SDS and by the serine protease inhibitor PMSF. Inhibited by the FDA approved drugs Diosmin, Acarbose and Ouabain. These drugs remain bound in the active site pocket and could be probable drug candidates to combat TB disease. Esterase that shows preference for short chain fatty acids. Contributes to the growth of M.tuberculosis during the nutritive stress. Elicits strong humoral response in both extrapulmonary and relapsed cases of tuberculosis patients. This chain is Esterase LipU, found in Mycobacterium tuberculosis (strain ATCC 25618 / H37Rv).